The following is a 178-amino-acid chain: Cytochrome b6-f complex iron-sulfur subunit (178 aa).

The chain crosses the membrane as a helical span at residues 20–42 (LLTFGTATGVALGALYPVANYFM). The Rieske domain occupies 65 to 161 (KTGWLATHQA…VDIEDDAVLV (97 aa)). The [2Fe-2S] cluster site is built by Cys107, His109, Cys125, and His128. Cysteines 112 and 127 form a disulfide.

It belongs to the Rieske iron-sulfur protein family. In terms of assembly, the 4 large subunits of the cytochrome b6-f complex are cytochrome b6, subunit IV (17 kDa polypeptide, PetD), cytochrome f and the Rieske protein, while the 4 small subunits are PetG, PetL, PetM and PetN. The complex functions as a dimer. The cofactor is [2Fe-2S] cluster.

The protein resides in the cellular thylakoid membrane. The enzyme catalyses 2 oxidized [plastocyanin] + a plastoquinol + 2 H(+)(in) = 2 reduced [plastocyanin] + a plastoquinone + 4 H(+)(out). Functionally, component of the cytochrome b6-f complex, which mediates electron transfer between photosystem II (PSII) and photosystem I (PSI), cyclic electron flow around PSI, and state transitions. The polypeptide is Cytochrome b6-f complex iron-sulfur subunit (Prochlorococcus marinus (strain AS9601)).